The primary structure comprises 229 residues: Potassium/proton antiporter CemA (229 aa).

3 helical membrane passes run 7-27 (FTPLLYLVSIVFLPWWISLLF), 107-127 (ILHFSTNIICFIILSGYSILG), and 189-209 (IISGLVSTFPVILDTILKYWI).

The protein belongs to the CemA family.

The protein localises to the plastid. It is found in the chloroplast inner membrane. The enzyme catalyses K(+)(in) + H(+)(out) = K(+)(out) + H(+)(in). In terms of biological role, contributes to K(+)/H(+) antiport activity by supporting proton efflux to control proton extrusion and homeostasis in chloroplasts in a light-dependent manner to modulate photosynthesis. Prevents excessive induction of non-photochemical quenching (NPQ) under continuous-light conditions. Indirectly promotes efficient inorganic carbon uptake into chloroplasts. This is Potassium/proton antiporter CemA from Helianthus annuus (Common sunflower).